Consider the following 256-residue polypeptide: Undecaprenyl-diphosphatase (256 aa).

7 consecutive transmembrane segments (helical) span residues 8 to 28, 41 to 61, 75 to 95, 96 to 116, 175 to 195, 208 to 228, and 236 to 256; these read VLGI…GHLI, FVKS…VVLY, IIAA…LIKG, FLIG…IILI, AEFS…YDLI, ILII…KWFL, and LKIF…FFLF.

Belongs to the UppP family.

The protein resides in the cell inner membrane. The catalysed reaction is di-trans,octa-cis-undecaprenyl diphosphate + H2O = di-trans,octa-cis-undecaprenyl phosphate + phosphate + H(+). In terms of biological role, catalyzes the dephosphorylation of undecaprenyl diphosphate (UPP). Confers resistance to bacitracin. In Aquifex aeolicus (strain VF5), this protein is Undecaprenyl-diphosphatase.